Reading from the N-terminus, the 254-residue chain is MLSGLVTALRTLTALPVPGRDAERFSSSLYWFPVVGLVIGGIVVLLARAGMGVGWPELAAVLALLGGLILTRGLHADGLADLADGFFGGRTREAALRIMKDPNVGSFGSLALIGVMLFKWICLLELARAEAYGMIAAGAVLSRTAQVLLAARMPYARSDGGTAMAFVEDAGWPHLLVASISGVVLLFVLLDWQLAPSLILLFGSVVALFFVGWLSHRKIGGITGDVLGACSELVEAAVWLLAALWLKGLFWAIA.

7 helical membrane passes run 27–47 (SSLYWFPVVGLVIGGIVVLLA), 50–70 (GMGVGWPELAAVLALLGGLIL), 104–124 (VGSFGSLALIGVMLFKWICLL), 131–151 (AYGMIAAGAVLSRTAQVLLAA), 170–190 (AGWPHLLVASISGVVLLFVLL), 194–214 (LAPSLILLFGSVVALFFVGWL), and 233–253 (LVEAAVWLLAALWLKGLFWAI).

This sequence belongs to the CobS family. Mg(2+) serves as cofactor.

It localises to the cell inner membrane. It catalyses the reaction alpha-ribazole + adenosylcob(III)inamide-GDP = adenosylcob(III)alamin + GMP + H(+). The enzyme catalyses alpha-ribazole 5'-phosphate + adenosylcob(III)inamide-GDP = adenosylcob(III)alamin 5'-phosphate + GMP + H(+). It participates in cofactor biosynthesis; adenosylcobalamin biosynthesis; adenosylcobalamin from cob(II)yrinate a,c-diamide: step 7/7. Joins adenosylcobinamide-GDP and alpha-ribazole to generate adenosylcobalamin (Ado-cobalamin). Also synthesizes adenosylcobalamin 5'-phosphate from adenosylcobinamide-GDP and alpha-ribazole 5'-phosphate. The protein is Adenosylcobinamide-GDP ribazoletransferase of Chlorobaculum tepidum (strain ATCC 49652 / DSM 12025 / NBRC 103806 / TLS) (Chlorobium tepidum).